Reading from the N-terminus, the 695-residue chain is Pre-mRNA-splicing factor CLF1 (695 aa).

12 HAT repeats span residues 41-73 (DVQR…FEIE), 75-107 (HDMR…SELK), 109-141 (GYIN…VEES), 143-174 (AHFD…FEVR), 176-207 (ERYE…FEVR), 296-328 (TIIL…LLEN), 333-365 (LVME…IWIK), 375-412 (NDIP…FEIR), 414-445 (DNLE…LETK), 447-479 (REFD…FEDS), 521-553 (QNFD…KKLT), and 591-629 (NNKD…FEGQ).

Belongs to the crooked-neck family. As to quaternary structure, associated with the spliceosome.

The protein resides in the nucleus. Functionally, involved in pre-mRNA splicing and cell cycle progression. Required for the spliceosome assembly and initiation of the DNA replication. This Candida glabrata (strain ATCC 2001 / BCRC 20586 / JCM 3761 / NBRC 0622 / NRRL Y-65 / CBS 138) (Yeast) protein is Pre-mRNA-splicing factor CLF1 (CLF1).